The sequence spans 405 residues: L-rhamnonate dehydratase (405 aa).

Substrate is bound by residues H33 and R59. Mg(2+)-binding residues include D226, E252, and E280. The active-site Proton acceptor is H329. Residue E349 participates in substrate binding.

It belongs to the mandelate racemase/muconate lactonizing enzyme family. RhamD subfamily. In terms of assembly, homooctamer; tetramer of dimers. Mg(2+) serves as cofactor.

It carries out the reaction L-rhamnonate = 2-dehydro-3-deoxy-L-rhamnonate + H2O. In terms of biological role, catalyzes the dehydration of L-rhamnonate to 2-keto-3-deoxy-L-rhamnonate (KDR). This is L-rhamnonate dehydratase from Escherichia coli (strain SMS-3-5 / SECEC).